The chain runs to 328 residues: uncharacterized protein (328 aa).

A Phosphoserine modification is found at Ser-170.

Its subcellular location is the cytoplasm. It is found in the nucleus. This is an uncharacterized protein from Schizosaccharomyces pombe (strain 972 / ATCC 24843) (Fission yeast).